The primary structure comprises 989 residues: AP-2 complex subunit alpha-2 (989 aa).

HEAT repeat units lie at residues 112–149 (EMLPLIINSFKEDLLARSDYFQSLALAAICNIGGKEVA), 188–225 (VTPDSWVERLVSVLDEPDFGVLTSLMSLLIELASENPI), 368–402 (IMIKKYQDTVLLSLKDSDISIRRRALDLLYGMCDK), and 403–440 (NTCKHIVAELLSYLQTADYAIREELVIKIANLAEKFAS). Residues 610-745 (DNSNTTSNTA…SSSPISSGGS (136 aa)) form a disordered region. The segment covering 611–623 (NSNTTSNTANNSN) has biased composition (low complexity). A compositionally biased stretch (polar residues) spans 624–638 (MINSQDSKISSGGFN). Residues 639 to 703 (QSPQPSQQQQ…QPVYQQQQQA (65 aa)) are compositionally biased toward low complexity. Over residues 704–714 (ESFSPVQSDTV) the composition is skewed to polar residues. Positions 715 to 745 (SSFGQQQQQQQGGFSSPTIQASSSPISSGGS) are enriched in low complexity.

This sequence belongs to the adaptor complexes large subunit family. Adaptor protein complex 2 (AP-2) is a heterotetramer composed of two large adaptins (alpha-type and beta-type subunits), a medium adaptin (mu-type subunit AP50) and a small adaptin (sigma-type subunit AP17).

The protein localises to the cell membrane. Its subcellular location is the membrane. It is found in the coated pit. Its function is as follows. Component of the adaptor complexes which link clathrin to receptors in coated vesicles. Clathrin-associated protein complexes are believed to interact with the cytoplasmic tails of membrane proteins, leading to their selection and concentration. The polypeptide is AP-2 complex subunit alpha-2 (ap2a1-1) (Dictyostelium discoideum (Social amoeba)).